We begin with the raw amino-acid sequence, 285 residues long: Bifunctional protein FolD (285 aa).

NADP(+)-binding positions include 166–168 and Ile232; that span reads GAS.

Belongs to the tetrahydrofolate dehydrogenase/cyclohydrolase family. As to quaternary structure, homodimer.

It catalyses the reaction (6R)-5,10-methylene-5,6,7,8-tetrahydrofolate + NADP(+) = (6R)-5,10-methenyltetrahydrofolate + NADPH. It carries out the reaction (6R)-5,10-methenyltetrahydrofolate + H2O = (6R)-10-formyltetrahydrofolate + H(+). It functions in the pathway one-carbon metabolism; tetrahydrofolate interconversion. Its function is as follows. Catalyzes the oxidation of 5,10-methylenetetrahydrofolate to 5,10-methenyltetrahydrofolate and then the hydrolysis of 5,10-methenyltetrahydrofolate to 10-formyltetrahydrofolate. This is Bifunctional protein FolD from Vibrio vulnificus (strain CMCP6).